Reading from the N-terminus, the 201-residue chain is MARGEQQRGEGGQRRDRRDRNAPEERVDSDIVEKLVHINRVAATVKGGRRFSFAALMVVGDQKGRVGFGHGKAREVPEAIRKATEEAKKTMIRVPLRESRTLHHDGAGRWGAGKVMMRAAPPGTGVIAGGPMRAVLETLGVQDVVAKSTGSSNPYNMVRATFEALKVQSSPRQIAAKRGKKVGDILGRRADGASAPEAIEG.

A disordered region spans residues 1-28; it reads MARGEQQRGEGGQRRDRRDRNAPEERVD. Residues 31–94 form the S5 DRBM domain; sequence IVEKLVHINR…EEAKKTMIRV (64 aa). The disordered stretch occupies residues 173–201; that stretch reads QIAAKRGKKVGDILGRRADGASAPEAIEG. Positions 181–191 are enriched in basic and acidic residues; sequence KVGDILGRRAD.

The protein belongs to the universal ribosomal protein uS5 family. Part of the 30S ribosomal subunit. Contacts proteins S4 and S8.

Its function is as follows. With S4 and S12 plays an important role in translational accuracy. Functionally, located at the back of the 30S subunit body where it stabilizes the conformation of the head with respect to the body. This Caulobacter vibrioides (strain ATCC 19089 / CIP 103742 / CB 15) (Caulobacter crescentus) protein is Small ribosomal subunit protein uS5.